The following is a 281-amino-acid chain: Orotidine 5'-phosphate decarboxylase (281 aa).

The Proton donor role is filled by K94.

Belongs to the OMP decarboxylase family. Type 2 subfamily.

The catalysed reaction is orotidine 5'-phosphate + H(+) = UMP + CO2. The protein operates within pyrimidine metabolism; UMP biosynthesis via de novo pathway; UMP from orotate: step 2/2. The chain is Orotidine 5'-phosphate decarboxylase from Thermomicrobium roseum (strain ATCC 27502 / DSM 5159 / P-2).